The sequence spans 479 residues: Probable polyamine transporter At3g19553 (479 aa).

12 consecutive transmembrane segments (helical) span residues leucine 22–valine 42, leucine 53–valine 73, glycine 86–tryptophan 106, phenylalanine 130–leucine 150, isoleucine 160–alanine 180, alanine 236–threonine 256, valine 275–serine 295, methionine 304–phenylalanine 324, threonine 332–phenylalanine 352, isoleucine 355–valine 375, phenylalanine 395–alanine 415, and phenylalanine 420–valine 440. A disordered region spans residues arginine 454–proline 479.

Belongs to the amino acid-polyamine-organocation (APC) superfamily. Polyamine:cation symporter (PHS) (TC 2.A.3.12) family.

The protein resides in the cell membrane. Its function is as follows. Probable cell membrane polyamine/proton symporter involved in the polyamine uptake in cells. The protein is Probable polyamine transporter At3g19553 of Arabidopsis thaliana (Mouse-ear cress).